Here is a 688-residue protein sequence, read N- to C-terminus: UvrABC system protein B (688 aa).

A Helicase ATP-binding domain is found at 31 to 414 (GRITAGETDV…LGIADGVVEQ (384 aa)). An ATP-binding site is contributed by 44-51 (GATGTGKS). A Beta-hairpin motif is present at residues 97–120 (YYDYYQPEAYVPQTDTFIEKDSSI). In terms of domain architecture, Helicase C-terminal spans 434 to 600 (QIDDLLEEIR…PLRKRIADIT (167 aa)). Residues 614 to 633 (LAGRDQKRKSPTPSLRSGGI) form a disordered region. Residues 642 to 677 (ESLIADLNAQMLAAAGELKFELAARLRDELSDLKRD) form the UVR domain.

The protein belongs to the UvrB family. In terms of assembly, forms a heterotetramer with UvrA during the search for lesions. Interacts with UvrC in an incision complex.

It is found in the cytoplasm. In terms of biological role, the UvrABC repair system catalyzes the recognition and processing of DNA lesions. A damage recognition complex composed of 2 UvrA and 2 UvrB subunits scans DNA for abnormalities. Upon binding of the UvrA(2)B(2) complex to a putative damaged site, the DNA wraps around one UvrB monomer. DNA wrap is dependent on ATP binding by UvrB and probably causes local melting of the DNA helix, facilitating insertion of UvrB beta-hairpin between the DNA strands. Then UvrB probes one DNA strand for the presence of a lesion. If a lesion is found the UvrA subunits dissociate and the UvrB-DNA preincision complex is formed. This complex is subsequently bound by UvrC and the second UvrB is released. If no lesion is found, the DNA wraps around the other UvrB subunit that will check the other stand for damage. The protein is UvrABC system protein B of Leifsonia xyli subsp. xyli (strain CTCB07).